Here is a 177-residue protein sequence, read N- to C-terminus: Large ribosomal subunit protein uL6 (177 aa).

The protein belongs to the universal ribosomal protein uL6 family. As to quaternary structure, part of the 50S ribosomal subunit.

Its function is as follows. This protein binds to the 23S rRNA, and is important in its secondary structure. It is located near the subunit interface in the base of the L7/L12 stalk, and near the tRNA binding site of the peptidyltransferase center. The polypeptide is Large ribosomal subunit protein uL6 (Zymomonas mobilis subsp. mobilis (strain ATCC 31821 / ZM4 / CP4)).